A 125-amino-acid polypeptide reads, in one-letter code: Large ribosomal subunit protein bL12 (125 aa).

This sequence belongs to the bacterial ribosomal protein bL12 family. In terms of assembly, homodimer. Part of the ribosomal stalk of the 50S ribosomal subunit. Forms a multimeric L10(L12)X complex, where L10 forms an elongated spine to which 2 to 4 L12 dimers bind in a sequential fashion. Binds GTP-bound translation factors.

Functionally, forms part of the ribosomal stalk which helps the ribosome interact with GTP-bound translation factors. Is thus essential for accurate translation. This Francisella tularensis subsp. holarctica (strain FTNF002-00 / FTA) protein is Large ribosomal subunit protein bL12.